A 176-amino-acid polypeptide reads, in one-letter code: Acireductone dioxygenase (176 aa).

Residues H100, H102, E106, and H145 each contribute to the Fe(2+) site. Residues H100, H102, E106, and H145 each coordinate Ni(2+).

This sequence belongs to the acireductone dioxygenase (ARD) family. In terms of assembly, monomer. The cofactor is Fe(2+). Requires Ni(2+) as cofactor.

It catalyses the reaction 1,2-dihydroxy-5-(methylsulfanyl)pent-1-en-3-one + O2 = 3-(methylsulfanyl)propanoate + CO + formate + 2 H(+). The enzyme catalyses 1,2-dihydroxy-5-(methylsulfanyl)pent-1-en-3-one + O2 = 4-methylsulfanyl-2-oxobutanoate + formate + 2 H(+). It functions in the pathway amino-acid biosynthesis; L-methionine biosynthesis via salvage pathway; L-methionine from S-methyl-5-thio-alpha-D-ribose 1-phosphate: step 5/6. Functionally, catalyzes 2 different reactions between oxygen and the acireductone 1,2-dihydroxy-3-keto-5-methylthiopentene (DHK-MTPene) depending upon the metal bound in the active site. Fe-containing acireductone dioxygenase (Fe-ARD) produces formate and 2-keto-4-methylthiobutyrate (KMTB), the alpha-ketoacid precursor of methionine in the methionine recycle pathway. Ni-containing acireductone dioxygenase (Ni-ARD) produces methylthiopropionate, carbon monoxide and formate, and does not lie on the methionine recycle pathway. This chain is Acireductone dioxygenase, found in Bacillus pumilus (strain SAFR-032).